Consider the following 393-residue polypeptide: 1-deoxy-D-xylulose 5-phosphate reductoisomerase (393 aa).

NADPH is bound by residues threonine 10, glycine 11, serine 12, isoleucine 13, arginine 37, and asparagine 124. Residue lysine 125 coordinates 1-deoxy-D-xylulose 5-phosphate. Residue glutamate 126 coordinates NADPH. Aspartate 150 contributes to the Mn(2+) binding site. Residues serine 151, glutamate 152, serine 182, and histidine 205 each coordinate 1-deoxy-D-xylulose 5-phosphate. Glutamate 152 lines the Mn(2+) pocket. Glycine 211 lines the NADPH pocket. 1-deoxy-D-xylulose 5-phosphate-binding residues include serine 218, asparagine 223, lysine 224, and glutamate 227. A Mn(2+)-binding site is contributed by glutamate 227.

It belongs to the DXR family. Mg(2+) is required as a cofactor. Mn(2+) serves as cofactor.

The enzyme catalyses 2-C-methyl-D-erythritol 4-phosphate + NADP(+) = 1-deoxy-D-xylulose 5-phosphate + NADPH + H(+). The protein operates within isoprenoid biosynthesis; isopentenyl diphosphate biosynthesis via DXP pathway; isopentenyl diphosphate from 1-deoxy-D-xylulose 5-phosphate: step 1/6. Functionally, catalyzes the NADPH-dependent rearrangement and reduction of 1-deoxy-D-xylulose-5-phosphate (DXP) to 2-C-methyl-D-erythritol 4-phosphate (MEP). In Nitrosococcus oceani (strain ATCC 19707 / BCRC 17464 / JCM 30415 / NCIMB 11848 / C-107), this protein is 1-deoxy-D-xylulose 5-phosphate reductoisomerase.